A 237-amino-acid chain; its full sequence is Ribosomal RNA small subunit methyltransferase G (237 aa).

S-adenosyl-L-methionine contacts are provided by residues glycine 78, phenylalanine 83, 129-130 (AE), and arginine 148.

The protein belongs to the methyltransferase superfamily. RNA methyltransferase RsmG family.

It localises to the cytoplasm. Its function is as follows. Specifically methylates the N7 position of a guanine in 16S rRNA. This is Ribosomal RNA small subunit methyltransferase G from Streptococcus pyogenes serotype M3 (strain ATCC BAA-595 / MGAS315).